The sequence spans 287 residues: Putative DNA-3-methyladenine glycosylase YfjP (287 aa).

The Proton acceptor role is filled by Asp-242.

It belongs to the alkylbase DNA glycosidase AlkA family.

The enzyme catalyses Hydrolysis of alkylated DNA, releasing 3-methyladenine, 3-methylguanine, 7-methylguanine and 7-methyladenine.. Functionally, hydrolysis of the deoxyribose N-glycosidic bond to excise 3-methyladenine, 3-methylguanine, 7-methylguanine, O2-methylthymine, and O2-methylcytosine from the damaged DNA polymer formed by alkylation lesions. The chain is Putative DNA-3-methyladenine glycosylase YfjP (yfjP) from Bacillus subtilis (strain 168).